A 126-amino-acid polypeptide reads, in one-letter code: Acidic phospholipase A2 S1E6-b (126 aa).

The first 3 residues, 1 to 3 (VEG), serve as a signal peptide directing secretion. Disulfide bonds link cysteine 29–cysteine 119, cysteine 31–cysteine 47, cysteine 46–cysteine 98, cysteine 52–cysteine 126, cysteine 53–cysteine 91, cysteine 60–cysteine 84, and cysteine 78–cysteine 89. Ca(2+) contacts are provided by tyrosine 30, glycine 32, and glycine 34. Residue histidine 50 is part of the active site. Aspartate 51 serves as a coordination point for Ca(2+). Aspartate 92 is an active-site residue.

As to quaternary structure, homodimer. The cofactor is Ca(2+). Expressed by the venom gland.

The protein resides in the secreted. It catalyses the reaction a 1,2-diacyl-sn-glycero-3-phosphocholine + H2O = a 1-acyl-sn-glycero-3-phosphocholine + a fatty acid + H(+). Snake venom phospholipase that inhibits ADP-induced platelet aggregation. PLA2 catalyzes the calcium-dependent hydrolysis of the 2-acyl groups in 3-sn-phosphoglycerides. This chain is Acidic phospholipase A2 S1E6-b, found in Calloselasma rhodostoma (Malayan pit viper).